The sequence spans 179 residues: Large ribosomal subunit protein uL10 (179 aa).

Belongs to the universal ribosomal protein uL10 family. In terms of assembly, part of the ribosomal stalk of the 50S ribosomal subunit. The N-terminus interacts with L11 and the large rRNA to form the base of the stalk. The C-terminus forms an elongated spine to which L12 dimers bind in a sequential fashion forming a multimeric L10(L12)X complex.

Its function is as follows. Forms part of the ribosomal stalk, playing a central role in the interaction of the ribosome with GTP-bound translation factors. This Symbiobacterium thermophilum (strain DSM 24528 / JCM 14929 / IAM 14863 / T) protein is Large ribosomal subunit protein uL10.